A 347-amino-acid chain; its full sequence is D-alanine--D-alanine ligase (347 aa).

The ATP-grasp domain maps to 134-332 (KLYAKDLGIK…LAQSLPKTPK (199 aa)). 161 to 216 (LINFNFPFIIKPNSAGSSLGVSVVKEEKELNYALDSAFEYSKEVLIEPFIQGVKEY) contacts ATP. Asp-288, Glu-300, and Asn-302 together coordinate Mg(2+).

It belongs to the D-alanine--D-alanine ligase family. The cofactor is Mg(2+). Requires Mn(2+) as cofactor.

Its subcellular location is the cytoplasm. It carries out the reaction 2 D-alanine + ATP = D-alanyl-D-alanine + ADP + phosphate + H(+). It participates in cell wall biogenesis; peptidoglycan biosynthesis. Its function is as follows. Cell wall formation. The chain is D-alanine--D-alanine ligase from Helicobacter pylori (strain HPAG1).